The sequence spans 359 residues: Probable cinnamyl alcohol dehydrogenase 8A (359 aa).

Cys-45 provides a ligand contact to Zn(2+). Thr-47 contacts NADP(+). Positions 67, 68, 98, 101, 104, 112, and 161 each coordinate Zn(2+). NADP(+) contacts are provided by residues Thr-165, 186–191 (GLGGLG), 209–214 (SSSPAK), Thr-249, Gly-273, and 296–298 (SGG).

This sequence belongs to the zinc-containing alcohol dehydrogenase family. In terms of assembly, homodimer. Zn(2+) is required as a cofactor.

The enzyme catalyses (E)-cinnamyl alcohol + NADP(+) = (E)-cinnamaldehyde + NADPH + H(+). It carries out the reaction (E)-coniferol + NADP(+) = (E)-coniferaldehyde + NADPH + H(+). The catalysed reaction is (E)-sinapyl alcohol + NADP(+) = (E)-sinapaldehyde + NADPH + H(+). It catalyses the reaction (E)-4-coumaroyl alcohol + NADP(+) = (E)-4-coumaraldehyde + NADPH + H(+). The enzyme catalyses (E)-caffeyl alcohol + NADP(+) = (E)-caffeyl aldehyde + NADPH + H(+). It functions in the pathway aromatic compound metabolism; phenylpropanoid biosynthesis. Its function is as follows. Involved in lignin biosynthesis. Catalyzes the final step specific for the production of lignin monomers. Catalyzes the NADPH-dependent reduction of coniferaldehyde, 5-hydroxyconiferaldehyde, sinapaldehyde, 4-coumaraldehyde and caffeyl aldehyde to their respective alcohols. This is Probable cinnamyl alcohol dehydrogenase 8A from Oryza sativa subsp. japonica (Rice).